A 288-amino-acid polypeptide reads, in one-letter code: MTKNVLSIQSHVVFGHAGNSAAVFPMRRLGVNVWPLNTVQFSNHTQYGHWTGGAIDATQMVELVDGIGAIGMLPRCDAVLSGYLGTPEQAQSVLEIVKAVKAANPRAWYFCDPVMGAVSGCKVEPGIQEFLVRTMPGVADAMAPNHTELQRLVGREIETLEEAVTACRELIARGPKLVLVKHLLDRNSPADRFNMLVVTEREAWMGQRPLYPFARQPVGVGDLTSAVFVARTLLGDSIRAAFEHTLAAVNAVVKATWQAGRYELELVAAQSEIAQPREWFDAWVGDTA.

Substrate is bound by residues serine 10 and 45 to 46; that span reads TQ. ATP is bound by residues aspartate 112, alanine 143, glutamate 148, and lysine 181. Aspartate 222 is a substrate binding site.

The protein belongs to the pyridoxine kinase family. PdxY subfamily. As to quaternary structure, homodimer. Mg(2+) serves as cofactor.

It catalyses the reaction pyridoxal + ATP = pyridoxal 5'-phosphate + ADP + H(+). It participates in cofactor metabolism; pyridoxal 5'-phosphate salvage; pyridoxal 5'-phosphate from pyridoxal: step 1/1. Pyridoxal kinase involved in the salvage pathway of pyridoxal 5'-phosphate (PLP). Catalyzes the phosphorylation of pyridoxal to PLP. In Paraburkholderia xenovorans (strain LB400), this protein is Pyridoxal kinase PdxY.